We begin with the raw amino-acid sequence, 262 residues long: Large ribosomal subunit protein uL5c (262 aa).

A chloroplast-targeting transit peptide spans 1 to 39 (MASPSLLQSSASSFHGRFSPLAAPSSARMLSPPLRNVVK).

Belongs to the universal ribosomal protein uL5 family. As to quaternary structure, part of the 50S ribosomal subunit; contacts the 5S rRNA.

It localises to the plastid. It is found in the chloroplast. Binds 5S rRNA, forms part of the central protuberance of the 50S subunit. The polypeptide is Large ribosomal subunit protein uL5c (RPL5) (Arabidopsis thaliana (Mouse-ear cress)).